The primary structure comprises 141 residues: Heavy metal-associated isoprenylated plant protein 29 (141 aa).

Positions 1–59 constitute an HMA domain; the sequence is MEVPMDCPGCENKVRKALEKMNGVHDVQIDIKQQRVTVTGSAEQKKVLKVARNVTKRDI. Residues cysteine 7 and cysteine 10 each coordinate a metal cation. At cysteine 138 the chain carries Cysteine methyl ester. Residue cysteine 138 is the site of S-farnesyl cysteine attachment. Positions 139-141 are cleaved as a propeptide — removed in mature form; sequence SIM.

It belongs to the HIPP family.

Heavy-metal-binding protein. The sequence is that of Heavy metal-associated isoprenylated plant protein 29 from Arabidopsis thaliana (Mouse-ear cress).